The following is a 56-amino-acid chain: Ribosome modulation factor (56 aa).

Belongs to the ribosome modulation factor family.

It is found in the cytoplasm. During stationary phase, converts 70S ribosomes to an inactive dimeric form (100S ribosomes). This chain is Ribosome modulation factor, found in Serratia proteamaculans (strain 568).